The chain runs to 778 residues: Zinc finger protein 749 (778 aa).

A KRAB domain is found at 8 to 101; sequence MVFEDVAIYF…ILKDILHLAE (94 aa). The C2H2-type 1; degenerate zinc-finger motif lies at 152 to 174; sequence FTCTQGGKDFTASSDLLQQQVLN. A C2H2-type 2; degenerate zinc finger spans residues 196 to 218; it reads FNSSQGGKDFCHQHGLFEHQKTH. The segment at 224 to 246 adopts a C2H2-type 3; degenerate zinc-finger fold; the sequence is YEFSECGELFRYNSNLIKYQQNH. The segment at 252 to 274 adopts a C2H2-type 4; degenerate zinc-finger fold; the sequence is YEGTEYGKTFIRKSNLVQHQKIH. 6 C2H2-type zinc fingers span residues 298–320, 326–348, 354–376, 382–404, 410–432, and 438–460; these read YECTQCGKAFLTQAHLVGHQKTH, YECNKCGKFFMYNSKLIRHQKVH, YECSECGKLFMDSFTLGRHQRVH, FECSICGKFFSHRSTLNMHQRVH, YKCSECGKAFSLKHNVVQHLKIH, and YECTECEKAFVRKSHLVQHQKIH. At K466 the chain carries N6-acetyllysine. C2H2-type zinc fingers lie at residues 483 to 505 and 511 to 533; these read YTCSECGKAFLTQAHLVGHQKIH and YECTQCAKAFVRKSHLVQHEKIH. Position 539 is an N6-acetyllysine (K539). The C2H2-type 13; degenerate zinc-finger motif lies at 556-578; that stretch reads YVCSECGKAFLTQAHLDGHQKIQ. C2H2-type zinc fingers lie at residues 584-606, 612-634, and 640-662; these read YECNECGKFFLDSYKLVIHQRIH, YKCSKCGKFFRYRCTLSRHQKVH, and YECSECGKFFRDSYKLIIHQRVH. The C2H2-type 17; atypical zinc-finger motif lies at 668–690; sequence YECSNCGKFLRYRSTFIKHHKVC. A C2H2-type 18 zinc finger spans residues 696 to 718; sequence HECSKCRELFRTKSSLIIHQQSH. A C2H2-type 19; degenerate zinc finger spans residues 751–773; sequence YECGESSKVFKYNSSLIKHQIIH. Glycyl lysine isopeptide (Lys-Gly) (interchain with G-Cter in SUMO2) cross-links involve residues K761 and K768.

Belongs to the krueppel C2H2-type zinc-finger protein family.

The protein resides in the nucleus. May be involved in transcriptional regulation. The protein is Zinc finger protein 749 (ZNF749) of Homo sapiens (Human).